We begin with the raw amino-acid sequence, 193 residues long: N-(5'-phosphoribosyl)anthranilate isomerase (193 aa).

The protein belongs to the TrpF family.

It catalyses the reaction N-(5-phospho-beta-D-ribosyl)anthranilate = 1-(2-carboxyphenylamino)-1-deoxy-D-ribulose 5-phosphate. The protein operates within amino-acid biosynthesis; L-tryptophan biosynthesis; L-tryptophan from chorismate: step 3/5. This Streptococcus mutans serotype c (strain ATCC 700610 / UA159) protein is N-(5'-phosphoribosyl)anthranilate isomerase.